Here is an 89-residue protein sequence, read N- to C-terminus: Abortive infection protein (89 aa).

It is found in the cell membrane. In terms of biological role, ABI may interact with a target in the cell membrane, which could be the product of the host's cmrA gene, and cause disruption of the cellular membrane such that lysis of the infected cell and death of the infecting phage would result. This is Abortive infection protein (abi) from Escherichia coli.